The primary structure comprises 65 residues: Large ribosomal subunit protein bL35 (65 aa).

The disordered stretch occupies residues 1–23 (MPKMKSNRGAAKRFKRTGSGKFK). Residues 10–23 (AAKRFKRTGSGKFK) show a composition bias toward basic residues.

This sequence belongs to the bacterial ribosomal protein bL35 family.

The sequence is that of Large ribosomal subunit protein bL35 from Acidithiobacillus ferrooxidans (strain ATCC 53993 / BNL-5-31) (Leptospirillum ferrooxidans (ATCC 53993)).